The following is a 139-amino-acid chain: Centromere protein S (139 aa).

The segment at 99–139 (ELASSNMEQKEKKKKKSSAAKGRKTEENETPVTESEDSNMA) is disordered. A compositionally biased stretch (basic residues) spans 110–120 (KKKKKSSAAKG).

It belongs to the TAF9 family. CENP-S/MHF1 subfamily. As to quaternary structure, heterodimer with CENPX, sometimes called MHF; this interaction stabilizes both partners. MHF heterodimers can assemble to form tetrameric structures. MHF also coassemble with CENPT-CENPW heterodimers at centromeres to form the tetrameric CENP-T-W-S-X complex. Forms a discrete complex with FANCM and CENPX, called FANCM-MHF; this interaction, probably mediated by direct binding between CENPS and FANCM, leads to synergistic activation of double-stranded DNA binding and strongly stimulates FANCM-mediated DNA remodeling. Recruited by FANCM to the Fanconi anemia (FA) core complex, which consists of CENPS, CENPX, FANCA, FANCB, FANCC, FANCE, FANCF, FANCG, FANCL, FANCM, FAAP24 and FAAP100. The FA core complex associates with Bloom syndrome (BLM) complex, which consists of at least BLM, DNA topoisomerase 3-alpha (TOP3A), RMI1/BLAP75, RPA1/RPA70 and RPA2/RPA32. The super complex between FA and BLM is called BRAFT. Component of the CENPA-CAD complex, composed of CENPI, CENPK, CENPL, CENPO, CENPP, CENPQ, CENPR and CENPS. The CENPA-CAD complex is probably recruited on centromeres by the CENPA-NAC complex, at least composed of CENPA, CENPC, CENPH, CENPM, CENPN, CENPT and CENPU.

It localises to the nucleus. It is found in the chromosome. The protein localises to the centromere. The protein resides in the kinetochore. In terms of biological role, DNA-binding component of the Fanconi anemia (FA) core complex. Required for the normal activation of the FA pathway, leading to monoubiquitination of the FANCI-FANCD2 complex in response to DNA damage, cellular resistance to DNA cross-linking drugs, and prevention of chromosomal breakage. In complex with CENPX (MHF heterodimer), crucial cofactor for FANCM in both binding and ATP-dependent remodeling of DNA. Stabilizes FANCM. In complex with CENPX and FANCM (but not other FANC proteins), rapidly recruited to blocked forks and promotes gene conversion at blocked replication forks. In complex with CENPT, CENPW and CENPX (CENP-T-W-S-X heterotetramer), involved in the formation of a functional kinetochore outer plate, which is essential for kinetochore-microtubule attachment and faithful mitotic progression. As a component of MHF and CENP-T-W-S-X complexes, binds DNA and bends it to form a nucleosome-like structure. DNA-binding function is fulfilled in the presence of CENPX, with the following preference for DNA substates: Holliday junction &gt; double-stranded &gt; splay arm &gt; single-stranded. Does not bind DNA on its own. The protein is Centromere protein S (CENPS) of Gallus gallus (Chicken).